Consider the following 300-residue polypeptide: Probable alpha-L-glutamate ligase (300 aa).

The 184-residue stretch at 104–287 (LQLLARQGID…IASRMIAWIE (184 aa)) folds into the ATP-grasp domain. ATP-binding positions include lysine 141, 178-179 (EY), aspartate 187, and 211-213 (RSN). 3 residues coordinate Mg(2+): aspartate 248, glutamate 260, and asparagine 262. Mn(2+) contacts are provided by aspartate 248, glutamate 260, and asparagine 262.

It belongs to the RimK family. It depends on Mg(2+) as a cofactor. Mn(2+) is required as a cofactor.

This Klebsiella pneumoniae (strain 342) protein is Probable alpha-L-glutamate ligase.